An 800-amino-acid polypeptide reads, in one-letter code: Putative antiporter subunit mnhA2 (800 aa).

Helical transmembrane passes span 3–23, 29–49, 78–98, 109–129, 133–153, 167–187, 202–222, 249–269, 273–293, 300–320, 337–357, 387–407, 428–448, 472–492, 527–547, 596–616, 627–647, 651–671, 676–696, 712–732, and 768–788; these read LVYL…TLFI, FAGY…LAQI, GLGL…FFYA, LPRF…IVVS, ILMY…ISYW, FIIT…LYII, SISE…GAFT, SATM…ILGL, YIYI…VTAL, GILA…VGLG, LILF…CALF, LVMT…GFLS, LTII…VYAV, PWLF…IFFI, GVNL…ILAL, IITV…VGLP, GPLE…LVFI, LTMV…FLLM, LALT…VSFS, TIKI…IFIA, and LDTM…YTLL.

The protein belongs to the CPA3 antiporters (TC 2.A.63) subunit A family. May form a heterooligomeric complex that consists of seven subunits: mnhA2, mnhB2, mnhC2, mnhD2, mnhE2, mnhF2 and mnhG2.

It is found in the cell membrane. This is Putative antiporter subunit mnhA2 (mnhA2) from Staphylococcus haemolyticus (strain JCSC1435).